We begin with the raw amino-acid sequence, 582 residues long: Fructose-1,6-bisphosphatase class 3 (582 aa).

This sequence belongs to the FBPase class 3 family. The cofactor is Mn(2+).

It catalyses the reaction beta-D-fructose 1,6-bisphosphate + H2O = beta-D-fructose 6-phosphate + phosphate. It functions in the pathway carbohydrate biosynthesis; gluconeogenesis. The sequence is that of Fructose-1,6-bisphosphatase class 3 from Saccharophagus degradans (strain 2-40 / ATCC 43961 / DSM 17024).